Consider the following 136-residue polypeptide: Large ribosomal subunit protein bL17 (136 aa).

It belongs to the bacterial ribosomal protein bL17 family. In terms of assembly, part of the 50S ribosomal subunit. Contacts protein L32.

The polypeptide is Large ribosomal subunit protein bL17 (Methylobacterium radiotolerans (strain ATCC 27329 / DSM 1819 / JCM 2831 / NBRC 15690 / NCIMB 10815 / 0-1)).